The chain runs to 202 residues: MENLIIYAFIYLLGSIPFGLILAKFFAKTDIKKEGSKSIGATNVLRVVKEKNPKLAKKLAIATIILDFAKAAIPLLTLKFLHYDQALLWSVAVLAILGHCFSIYLLFEGGKGIATGAGAMIVLLPLEVLTAFIVWVVIGKIFKISSLASLAALLAFVVSSFIFNYDLEIHTHAPVFIIAFIIVYKHLPNIKRLIFKEECKVI.

Helical transmembrane passes span 3-23, 87-107, 118-138, 144-164, and 167-187; these read NLIIYAFIYLLGSIPFGLILA, LLWSVAVLAILGHCFSIYLLF, GAMIVLLPLEVLTAFIVWVVI, ISSLASLAALLAFVVSSFIFN, and LEIHTHAPVFIIAFIIVYKHL.

The protein belongs to the PlsY family. In terms of assembly, probably interacts with PlsX.

It localises to the cell inner membrane. The catalysed reaction is an acyl phosphate + sn-glycerol 3-phosphate = a 1-acyl-sn-glycero-3-phosphate + phosphate. It functions in the pathway lipid metabolism; phospholipid metabolism. Functionally, catalyzes the transfer of an acyl group from acyl-phosphate (acyl-PO(4)) to glycerol-3-phosphate (G3P) to form lysophosphatidic acid (LPA). This enzyme utilizes acyl-phosphate as fatty acyl donor, but not acyl-CoA or acyl-ACP. In Campylobacter jejuni subsp. jejuni serotype O:2 (strain ATCC 700819 / NCTC 11168), this protein is Glycerol-3-phosphate acyltransferase.